A 505-amino-acid polypeptide reads, in one-letter code: AMP phosphorylase (505 aa).

AMP is bound by residues glycine 170, serine 196–serine 201, and threonine 205. Aspartate 258 (proton donor) is an active-site residue. AMP is bound by residues serine 266 and lysine 290.

This sequence belongs to the thymidine/pyrimidine-nucleoside phosphorylase family. Type 2 subfamily.

It carries out the reaction AMP + phosphate = alpha-D-ribose 1,5-bisphosphate + adenine. It catalyses the reaction CMP + phosphate = cytosine + alpha-D-ribose 1,5-bisphosphate. The enzyme catalyses UMP + phosphate = alpha-D-ribose 1,5-bisphosphate + uracil. Catalyzes the conversion of AMP and phosphate to adenine and ribose 1,5-bisphosphate (R15P). Exhibits phosphorylase activity toward CMP and UMP in addition to AMP. Functions in an archaeal AMP degradation pathway, together with R15P isomerase and RubisCO. In Methanococcus maripaludis (strain C7 / ATCC BAA-1331), this protein is AMP phosphorylase.